The primary structure comprises 3095 residues: MRSSKSKEVPLPNPRNSQSKETIQDVTTSWDALSQTKAALRHIENKLEVTPTSTAVIDSVMDTKKSASATRKISRKDGRCLDDSWASAPTSKFSKPRKEKSRSPLRATTLESNVKKNNRVEFREPLVSYRETHGTPFSLSPSHLESKHVYCIHEEKPESGKQMVVSREDRNIQCCDFESAQPSVISDTVVRFLNDGPAIDALHSSECLMKMGVHVRTEDEMPNRTKGSENNSKPSLNNMEHDVDPKVMLLSDSSPSSSACNSQRSDISKRQQHDIKLEKLKERIRKQWEHSEEINGQAQTLGHIDHPVMVVNVDNSVTTKVRKVATAPPAPAYKGFNPSETKIRTPDGKVWQEAEFQSMSRELYRDLALQFTDDTSVKEKPVEKSKEKKVVKPVRKIQKVTQLSNPECKTGSSRLISTSSWRDGQKLVKKILGPAPKMEQKERRPTSNDRSGRERVAKFGGHIGRAESDPKLDVSHKQLPRSSARSRSSRAWSETNIVKSALSLPDNKQEESAALNKDFLPVEIRGILDDLQLDSSAQAVRQEAGEGQNQKSSAPEQVPRSHSPVKRKPDKITANEDPPVISKKRHYDTDEVRQYIVRQQEERRRRQHEEKKAQKEATEQKNKRLQELYRRQREAFSKAKTVPPSDPLVSRRLQETYSKLLLEKTLLEEPARQHVTQDIQARPGYQPSGESDKENKIQERPPSASSSSDLSLSEPPQPLARRDLMEPTWMQPDRLSPRVHSSQAQPLAGTTENLLSHLLHLEHVGILHKDYESVLPAKKSHNTASGPLTFTPQPYLTSQAPHPDALLKPSTSQYKTKLDRIEALKATAASLSSRIESEAKKLAGASINYGSVWNTECDVKLAPQENGPWTKAISPPVKEDIEDAFSARIQKMLGTCVSHAAFDDELPGVGSLSEYKKLPEMIRPQSAISSLRMKSPSPKPGGLLAQLCRRQTDSSSSDIQACSQERAKRSLCSSIDSVSEGPLLSEGSLSEEEERRDARPLLKVAEILKEKEFCAGERNSYEPIKEFQKEAEKFLPLFGHIGGTQSKGPWEELAKGSPHSVINIFTKSYQLYGKGFEDRGTLVSRPLNATATPLSSVSYEDDFVSSPGSGTLTERKSTLESQVDGSSLGVQEEHLSRQFACDLASVDATSQHSSGARSAGSTRSSSASKGKKGKKDKMDWLDSLTGSAQNPLIDEEKVQSDSERGSHPSRKLGTGSKLAVGDSEQTLDAESTLEDLSGHSVSGSSDKGRSQKTPTSPLSPSSQKLLQFDLPGTSLERSKSSVIVPPTTTGFKPTAAFTDVNKTEMASAPGPQRFSPAGLQHRMAAELSYLSALEESVRQLSDVERVRGIALAQQESVSLAQIIKAQQQRHERDLALLKLKAEQEALECQRQLEETRNKTAQVHAESLQQVVKSQREVTEVLQEATCKIAAQQSETARLTTDAARQICEMAELTRTHLADAITTSGVPLATLYDHQRQHFPDFMRKLRTKAETDRISHSASHSQSKEGAVDSKRQKFSPSRDSYSESSRYKSHDYRSSGSSRQDSPSVPPSKENEKPFHGEKMESSVDEQLQTAADDSLRSDSIPSLPDEKDSTSIATEYSLKFDESMTEDEIEEKSFRSLLPSESHRRFNMEKKRGHHDDSDEDASPDKTALSSTKELSMPFSGGQDSFSKFTMEMVRQYMKEEEVRAAHQSSLLRLREKALKEKTKAELAWLEHQKKHLRDKGEDDKMPPLRKKQRGLLLRLQQEKAEIKRLQEANKAARKERQLILKQQEEIERIRQTTIKLQEKLKSAGEKKLGSLADDDEAEDNKAASPGPPGLETRSPSPISISSSETSSIMQKLKSMRSRMDEKFLTKREQKLMQRRQHAEELLEWKRRLDAEEAEIQQMEKQALAAWDKELVKPRTPKKEQESQRTEQKGIASEEGSPMPSYSPRNSESCIPEDLGSPSDLCVPSEARVQAQPGSPEHSTLTEEMVFSQELESTSPSKHSPPKSCLSMSKQESSKASHRTEGHCHLPVKSHQPCYSWSDESLSMTQSETTSDQSDIEGRIRALKDELRKRKSVVEQLKREQRKRQKERLKAQEASLLRQLETYDEFIKKTEGELSQDLDISPTSKFQMKTLSSVSEKPKIKPHPLHRSETAKTWKSVTESERSRGSLASIAEHVDSSLSCSERAISERSLSAYAKRGVELDSRIEHLQASSPDLSSRKAQTESRDSLESAPSLSPVKELNAPDRIYDVSEAKAEDTSQKSEIQEIESMKLESSEVEDACCKQSGGSEVLLKLDLASETLSSKELPSDSANVQQDLDKPATETSHEKEEALKEDQSNHSTDDRSPDIQSAGGIPEQGCRESGDSTCSGQLSVPKESSYSEDFEVSSFRKGISADEISKDDSEGSSPSSLRKDSQSHRDRSQLTRSSRSRATGSGSDEEISECLGEKSLSVHSGVHSERLLELRSPTELMKSKERSDVGHEQGGTEPLPLAATEELLDFHIGDRVLIGSVQPGTLRFKGETDFAKGFWAGVELDKPEGNNNGTYDGIVYFVCKDKHGIFAPPQKISHLLENFDDTDINEDEESYSDEQYQPYNQEQKDIKCLKDRENNIAEYFCEKSLPSMHNTDASVDKDRSLNIETDTSEVLEVHGHQQPSVDPLISYKENKVLVSDATESVPAAAGAATSDNTFSGESKQQQLAEKEENFYSQVLEKPSTPLLDLLTREKNQLEAQLKSSISEEKKSKQQLETVSLLTDSLLQVFVKDTVSQLQQVKKARNEKIQLSNQEFLDQKKVPPQDLPQNTEEQSPSVPSCFLRSELEDEKEEISSPDMCPRPESPVFGASGQEELAKRLAELEISREFLSALDDQDWFDEDFGLSSSHKIQKNKAEETIVPLMAEPKRAPQKPCETLLAVPHTAEEVESLVHNAAEELWKWKELGQDLHGLSLPTTFLGGASKGLDIGSTSRRVYKQAVFDLTKEIFEEIFAEDPNVNQPVWMKPCRINSSYFRRVKNPNNLDEIKHFITTEVLKLLSLKKEPNHKTDWQKMMKFGRKKRDRVDHILVQELHEEEAQWVNYDEDELCVKMQLADGIFETLIKDTIDVLNQISEKQGRMLLV.

2 disordered regions span residues 1–24 (MRSSKSKEVPLPNPRNSQSKETIQ) and 63–105 (TKKS…RSPL). The span at 14-24 (PRNSQSKETIQ) shows a compositional bias: polar residues. Phosphoserine is present on residues Ser-84 and Ser-140. Disordered regions lie at residues 219–239 (DEMPNRTKGSENNSKPSLNNM), 251–272 (SDSSPSSSACNSQRSDISKRQQ), and 430–493 (KILG…RAWS). Polar residues predominate over residues 228-238 (SENNSKPSLNN). A compositionally biased stretch (low complexity) spans 251–265 (SDSSPSSSACNSQRS). Basic and acidic residues-rich tracts occupy residues 438 to 457 (MEQKERRPTSNDRSGRERVA) and 464 to 476 (GRAESDPKLDVSH). Phosphoserine is present on Ser-468. Low complexity predominate over residues 481-491 (RSSARSRSSRA). The residue at position 503 (Ser-503) is a Phosphoserine. Disordered regions lie at residues 538–623 (QAVR…QKNK) and 671–718 (ARQH…PPQP). Basic and acidic residues-rich tracts occupy residues 587–623 (YDTDEVRQYIVRQQEERRRRQHEEKKAQKEATEQKNK) and 690–699 (ESDKENKIQE). Residues 596 to 641 (IVRQQEERRRRQHEEKKAQKEATEQKNKRLQELYRRQREAFSKAKT) are a coiled coil. Ser-691 is modified (phosphoserine). A compositionally biased stretch (low complexity) spans 701–714 (PPSASSSSDLSLSE). Residues Ser-874 and Ser-935 each carry the phosphoserine modification. The interval 977–996 (SVSEGPLLSEGSLSEEEERR) is disordered. Low complexity predominate over residues 979–988 (SEGPLLSEGS). Ser-1057 bears the Phosphoserine mark. 2 disordered regions span residues 1099-1128 (YEDDFVSSPGSGTLTERKSTLESQVDGSSL) and 1151-1265 (QHSS…SQKL). Positions 1119–1128 (LESQVDGSSL) are enriched in polar residues. A compositionally biased stretch (low complexity) spans 1153–1168 (SSGARSAGSTRSSSAS). Residues 1194–1206 (DEEKVQSDSERGS) are compositionally biased toward basic and acidic residues. Residue Ser-1200 is modified to Phosphoserine. Residues 1251 to 1265 (QKTPTSPLSPSSQKL) are compositionally biased toward low complexity. Thr-1253 carries the phosphothreonine modification. Phosphoserine occurs at positions 1256 and 1259. A coiled-coil region spans residues 1363 to 1402 (IKAQQQRHERDLALLKLKAEQEALECQRQLEETRNKTAQV). Disordered regions lie at residues 1490-1668 (AETD…GQDS), 1720-1739 (LRDKGEDDKMPPLRKKQRGL), 1787-1864 (KLKS…QRRQ), and 1893-2017 (AWDK…PVKS). Basic and acidic residues predominate over residues 1503-1513 (QSKEGAVDSKR). 2 stretches are compositionally biased toward low complexity: residues 1517–1526 (SPSRDSYSES) and 1536–1545 (SSGSSRQDSP). The segment covering 1551–1564 (KENEKPFHGEKMES) has biased composition (basic and acidic residues). Ser-1606 is subject to Phosphoserine. The segment covering 1624 to 1640 (ESHRRFNMEKKRGHHDD) has biased composition (basic and acidic residues). Phosphoserine is present on residues Ser-1641 and Ser-1646. The stretch at 1700 to 1793 (KALKEKTKAE…LQEKLKSAGE (94 aa)) forms a coiled coil. Basic and acidic residues predominate over residues 1787 to 1796 (KLKSAGEKKL). Ser-1812 is subject to Phosphoserine. Residues 1819–1835 (ETRSPSPISISSSETSS) are compositionally biased toward low complexity. Composition is skewed to basic and acidic residues over residues 1845-1864 (SRMDEKFLTKREQKLMQRRQ) and 1894-1915 (WDKELVKPRTPKKEQESQRTEQ). Residues 1850–1893 (KFLTKREQKLMQRRQHAEELLEWKRRLDAEEAEIQQMEKQALAA) adopt a coiled-coil conformation. Residue Ser-1930 is modified to Phosphoserine. Residues 1980 to 1994 (STSPSKHSPPKSCLS) show a composition bias toward low complexity. Residues 1999 to 2011 (ESSKASHRTEGHC) are compositionally biased toward basic and acidic residues. Positions 2043–2092 (IEGRIRALKDELRKRKSVVEQLKREQRKRQKERLKAQEASLLRQLETYDE) form a coiled coil. Ser-2108 carries the phosphoserine modification. Disordered stretches follow at residues 2116 to 2155 (KTLSSVSEKPKIKPHPLHRSETAKTWKSVTESERSRGSLA), 2191 to 2265 (IEHL…VEDA), 2286 to 2427 (LSSK…EISE), and 2440 to 2471 (VHSERLLELRSPTELMKSKERSDVGHEQGGTE). Positions 2133–2151 (HRSETAKTWKSVTESERSR) are enriched in basic and acidic residues. Ser-2198 is modified (phosphoserine). Composition is skewed to basic and acidic residues over residues 2202–2214 (SSRKAQTESRDSL) and 2227–2259 (NAPDRIYDVSEAKAEDTSQKSEIQEIESMKLES). The span at 2286-2300 (LSSKELPSDSANVQQ) shows a compositional bias: polar residues. Residues 2301-2331 (DLDKPATETSHEKEEALKEDQSNHSTDDRSP) are compositionally biased toward basic and acidic residues. Residues 2349 to 2362 (DSTCSGQLSVPKES) are compositionally biased toward polar residues. 2 stretches are compositionally biased toward basic and acidic residues: residues 2377–2387 (ISADEISKDDS) and 2395–2407 (LRKDSQSHRDRSQ). A compositionally biased stretch (low complexity) spans 2409 to 2420 (TRSSRSRATGSG). Phosphoserine is present on residues Ser-2421 and Ser-2450. Basic and acidic residues predominate over residues 2455 to 2465 (MKSKERSDVGH). The CAP-Gly domain maps to 2504 to 2546 (GETDFAKGFWAGVELDKPEGNNNGTYDGIVYFVCKDKHGIFAP). Thr-2671 is subject to Phosphothreonine. Positions 2700-2731 (LLDLLTREKNQLEAQLKSSISEEKKSKQQLET) form a coiled coil. The tract at residues 2767–2793 (QEFLDQKKVPPQDLPQNTEEQSPSVPS) is disordered. Over residues 2780-2791 (LPQNTEEQSPSV) the composition is skewed to polar residues. Residues Ser-2809 and Ser-2818 each carry the phosphoserine modification.

Part of a ternary complex that contains CEP350, CEP43 and MAPRE1. Interacts (via C-terminus) directly with CEP43 (via N-terminus). Interacts with NR1H3, PPARA, PPARD and PPARG. Interacts directly with microtubules. Interacts with the fusion protein CEP43-FGFR1, and by doing so recruits and activates PI3K and PLC-gamma. Interacts with CYLD. Interacts with CFAP157. Interacts with CEP19 (via C-terminus). Interacts with CEP78; promoting CEP78 localization to centrosome and centriole. Phosphorylated during mitosis.

The protein localises to the cytoplasm. Its subcellular location is the cytoskeleton. The protein resides in the microtubule organizing center. It localises to the centrosome. It is found in the spindle. The protein localises to the nucleus. Its subcellular location is the centriole. The protein resides in the cilium basal body. Plays an essential role in centriole growth by stabilizing a procentriolar seed composed of at least, SASS6 and CPAP. Required for anchoring microtubules to the centrosomes and for the integrity of the microtubule network. Recruits PPARA to discrete subcellular compartments and thereby modulates PPARA activity. Required for ciliation. The polypeptide is Centrosome-associated protein 350 (Mus musculus (Mouse)).